Here is a 326-residue protein sequence, read N- to C-terminus: MAALHHQAAAAPVTTTTDGGELRAMDLYEKLEKVGEGTYGKVYKAREKATGRIVALKKTRLPEDDEGVPPTALREVSLLRMLSQDSHVVRLLDLKQGQNKEGQTILYLVFEYMDTDLKKFIRAHRQNLQKIPVPTVKILMYQLCKGVAFCHGRGVLHRDLKPHNLLMDRKTMALKIADLGLSRSFTVPLKKYTHEILTLWYRAPEVLLGAAHYSTPVDIWSVGCIFAELATNQPLFAGDSEVQQLLHIFKLLGTPNEQVWPGVSKLPNWHEYPQWNPSKVSDLVHGLDADALDLLEKMLQYEPSKRISAKKAMEHPYFNDVNKELY.

In terms of domain architecture, Protein kinase spans 28-318 (YEKLEKVGEG…AKKAMEHPYF (291 aa)). ATP-binding positions include 34–42 (VGEGTYGKV) and Lys57. Thr38 bears the Phosphothreonine mark. Tyr39 is modified (phosphotyrosine). Asp159 acts as the Proton acceptor in catalysis. At Thr193 the chain carries Phosphothreonine.

Belongs to the protein kinase superfamily. CMGC Ser/Thr protein kinase family. CDC2/CDKX subfamily. In terms of assembly, interacts with CYCB2-1 and CYCB2-2. Binding to CYCB2-1 or CYCB2-2 activates CDK kinase. Expressed in the dividing region of the root apex and the intercalary meristem of internodes.

Its subcellular location is the nucleus. It localises to the cytoplasm. The protein resides in the cytoskeleton. The protein localises to the spindle. It is found in the phragmoplast. The catalysed reaction is L-seryl-[protein] + ATP = O-phospho-L-seryl-[protein] + ADP + H(+). It catalyses the reaction L-threonyl-[protein] + ATP = O-phospho-L-threonyl-[protein] + ADP + H(+). It carries out the reaction [DNA-directed RNA polymerase] + ATP = phospho-[DNA-directed RNA polymerase] + ADP + H(+). Its function is as follows. Forms a complex with CYCB2-1 or CYCB2-2 that activates CDK kinase in tobacco BY2 cells during G2/M (mitosis) phases. May be involved in the regulation of the cell cycle at the G2/M transition. This chain is Cyclin-dependent kinase B2-1 (CDKB2-1), found in Oryza sativa subsp. japonica (Rice).